The following is a 191-amino-acid chain: Small ribosomal subunit protein uS4A (191 aa).

2 positions are modified to phosphoserine: S50 and S161. In terms of domain architecture, S4 RNA-binding spans 107–181; sequence RRLQTQVFKL…CKRKRLRSQE (75 aa). Position 164 is a phosphotyrosine (Y164). The tract at residues 166–191 is disordered; that stretch reads GGRPGRCKRKRLRSQEGGEGEEAEEE. Residue S179 is modified to Phosphoserine.

The protein belongs to the universal ribosomal protein uS4 family. Component of the small ribosomal subunit (SSU). Mature yeast ribosomes consist of a small (40S) and a large (60S) subunit. The 40S small subunit contains 1 molecule of ribosomal RNA (18S rRNA) and at least 33 different proteins. The large 60S subunit contains 3 rRNA molecules (25S, 5.8S and 5S rRNA) and at least 46 different proteins. Interacts with snoRNA U3. uS11 interacts with MPP10. Component of the ribosomal small subunit (SSU) processome composed of at least 40 protein subunits and snoRNA U3.

The protein resides in the cytoplasm. In terms of biological role, component of the ribosome, a large ribonucleoprotein complex responsible for the synthesis of proteins in the cell. The small ribosomal subunit (SSU) binds messenger RNAs (mRNAs) and translates the encoded message by selecting cognate aminoacyl-transfer RNA (tRNA) molecules. The large subunit (LSU) contains the ribosomal catalytic site termed the peptidyl transferase center (PTC), which catalyzes the formation of peptide bonds, thereby polymerizing the amino acids delivered by tRNAs into a polypeptide chain. The nascent polypeptides leave the ribosome through a tunnel in the LSU and interact with protein factors that function in enzymatic processing, targeting, and the membrane insertion of nascent chains at the exit of the ribosomal tunnel. uS4 is involved in nucleolar processing of pre-18S ribosomal RNA and ribosome assembly. The sequence is that of Small ribosomal subunit protein uS4A (rps901) from Schizosaccharomyces pombe (strain 972 / ATCC 24843) (Fission yeast).